A 230-amino-acid chain; its full sequence is DNA mismatch repair protein MutH (230 aa).

It belongs to the MutH family.

The protein localises to the cytoplasm. Sequence-specific endonuclease that cleaves unmethylated GATC sequences. It is involved in DNA mismatch repair. This Citrobacter koseri (strain ATCC BAA-895 / CDC 4225-83 / SGSC4696) protein is DNA mismatch repair protein MutH.